A 199-amino-acid polypeptide reads, in one-letter code: MIQISDKAQTYFRKLIEREGVPGMGVRLSAVDAGTPRADARLEFAEPADLSGDEWAIDCDGFTLYVVAASVPWMDGAEIDYVTQSTGNQQLTIKAPKIKGEAPAESASMVERVRWVVENEINPQLASHGGRVAVQEVSADGVVLLRFGGGCHGCGMADVTLKQGIEKTLMGRVPGVTAVRDATDHATGDAPYIPRDSAA.

Positions 151 and 154 each coordinate [4Fe-4S] cluster.

This sequence belongs to the NfuA family. Homodimer. It depends on [4Fe-4S] cluster as a cofactor.

Functionally, involved in iron-sulfur cluster biogenesis. Binds a 4Fe-4S cluster, can transfer this cluster to apoproteins, and thereby intervenes in the maturation of Fe/S proteins. Could also act as a scaffold/chaperone for damaged Fe/S proteins. The sequence is that of Fe/S biogenesis protein NfuA from Xanthomonas euvesicatoria pv. vesicatoria (strain 85-10) (Xanthomonas campestris pv. vesicatoria).